The chain runs to 151 residues: Ribosome maturation factor RimP (151 aa).

Belongs to the RimP family.

It localises to the cytoplasm. Its function is as follows. Required for maturation of 30S ribosomal subunits. In Shewanella oneidensis (strain ATCC 700550 / JCM 31522 / CIP 106686 / LMG 19005 / NCIMB 14063 / MR-1), this protein is Ribosome maturation factor RimP.